The primary structure comprises 160 residues: 6,7-dimethyl-8-ribityllumazine synthase (160 aa).

Residues phenylalanine 22, 57 to 59, and 81 to 83 contribute to the 5-amino-6-(D-ribitylamino)uracil site; these read TYE and TII. Residue 86–87 participates in (2S)-2-hydroxy-3-oxobutyl phosphate binding; the sequence is QT. Histidine 89 acts as the Proton donor in catalysis. Leucine 114 provides a ligand contact to 5-amino-6-(D-ribitylamino)uracil. Arginine 128 contributes to the (2S)-2-hydroxy-3-oxobutyl phosphate binding site.

The protein belongs to the DMRL synthase family. Forms an icosahedral capsid composed of 60 subunits, arranged as a dodecamer of pentamers.

The catalysed reaction is (2S)-2-hydroxy-3-oxobutyl phosphate + 5-amino-6-(D-ribitylamino)uracil = 6,7-dimethyl-8-(1-D-ribityl)lumazine + phosphate + 2 H2O + H(+). It functions in the pathway cofactor biosynthesis; riboflavin biosynthesis; riboflavin from 2-hydroxy-3-oxobutyl phosphate and 5-amino-6-(D-ribitylamino)uracil: step 1/2. In terms of biological role, catalyzes the formation of 6,7-dimethyl-8-ribityllumazine by condensation of 5-amino-6-(D-ribitylamino)uracil with 3,4-dihydroxy-2-butanone 4-phosphate. This is the penultimate step in the biosynthesis of riboflavin. The protein is 6,7-dimethyl-8-ribityllumazine synthase of Buchnera aphidicola subsp. Acyrthosiphon pisum (strain APS) (Acyrthosiphon pisum symbiotic bacterium).